A 68-amino-acid polypeptide reads, in one-letter code: Palustrin-1c (68 aa).

Residues 1 to 22 (MFTTKKSLLLLFFLGTISLSLC) form the signal peptide. The propeptide occupies 23-39 (EEERGADEEEGDGEKLT). C62 and C68 are disulfide-bonded.

As to expression, expressed by the skin glands.

It is found in the secreted. Functionally, antimicrobial activity against Gram-negative bacterium E.coli. Stimulates insulin release. The polypeptide is Palustrin-1c (Lithobates palustris (Pickerel frog)).